A 426-amino-acid chain; its full sequence is Arrestin domain-containing protein 17 (426 aa).

Polar residues predominate over residues 320–329 (QSAGNGSLPK). The segment at 320–340 (QSAGNGSLPKSSIKDSPPKWD) is disordered. The segment covering 331–340 (SIKDSPPKWD) has biased composition (basic and acidic residues).

It belongs to the arrestin family. In terms of assembly, interacts with tax-6. Post-translationally, phosphorylated. Dephosphorylated by tax-6 in vitro. As to expression, expressed from the comma stage to adulthood in the nervous system, including sensory neurons and interneurons posterior to the nerve ring, dorsal and ventral nerve cords, tail ganglia and, CEP, HSN, ASK, ADL, ASH and ASJ neurons.

Its function is as follows. Involved in several behavioral responses including chemotaxis towards lysine and adaptation to repeated osmotic stress. In addition, plays a role in resuming egg-laying and locomotion after starvation. This is Arrestin domain-containing protein 17 from Caenorhabditis elegans.